The following is a 652-amino-acid chain: Leucine-rich repeat-containing protein 4 (652 aa).

An N-terminal signal peptide occupies residues 1–40 (MKLLWQVTVHHTWNAVLLPVVYLTAQVWILCAAIAAAASA). Over 1–526 (MKLLWQVTVH…SLDEVMKTTK (526 aa)) the chain is Extracellular. The region spanning 41–74 (GPQNCPSVCSCSNQFSKVVCTRRGLSEVPQGIPS) is the LRRNT domain. 2 disulfide bridges follow: Cys45–Cys51 and Cys49–Cys60. 9 LRR repeats span residues 75-96 (NTRY…TFRH), 99-120 (HLEV…AFNG), 123-144 (SLNT…AFEY), 147-168 (KLRE…AFNR), 171-193 (SLMR…AFEG), 196-217 (NLKY…TPLV), 218-239 (GLEE…SFHG), 242-263 (SLKK…AFDG), and 266-287 (SLVE…LFTP). Residues 299-351 (NPWNCDCDILWLAWWLREYIPTNSTCCGRCHAPMHMRGRYLVEVDQASFQCSA) form the LRRCT domain. 2 disulfides stabilise this stretch: Cys303–Cys328 and Cys305–Cys349. Asn321 and Asn362 each carry an N-linked (GlcNAc...) asparagine glycan. Residues 352-441 (PFIMDAPRDL…SNASAYLNVS (90 aa)) enclose the Ig-like C2-type domain. A disulfide bridge connects residues Cys373 and Cys423. Residues 527-547 (IIIGCFVAVTLLAAAMLIVFY) form a helical membrane-spanning segment. The Cytoplasmic portion of the chain corresponds to 548–652 (KLRKRHQQRS…TKDKVQETQI (105 aa)).

In terms of assembly, interacts (via LRR repeats) with NTNG2. Interacts with DLG4. Found in a complex with NMDA receptors. Post-translationally, N-glycosylated. In terms of tissue distribution, mainly expressed in the brain. Expression is concentrated in the olfactory bulb, cortex, hippocampus and cerebellum in adult brain. Detected both embryonically and postnatally with stronger expression in postnatal stages.

It localises to the membrane. Its subcellular location is the postsynaptic cell membrane. Synaptic adhesion protein. Regulates the formation of exitatory synapses through the recruitment of pre-and-postsynaptic proteins. Organize the lamina/pathway-specific differentiation of dendrites. Plays an important role for auditory synaptic responses. Involved in the suppression of glioma. The chain is Leucine-rich repeat-containing protein 4 (Lrrc4) from Rattus norvegicus (Rat).